Consider the following 125-residue polypeptide: uncharacterized protein (125 aa).

The 107-residue stretch at 15–121 folds into the PRD domain; that stretch reads QINQSIIDVI…HSLVLEQKQL (107 aa).

This is an uncharacterized protein from Haemophilus influenzae (strain ATCC 51907 / DSM 11121 / KW20 / Rd).